Consider the following 258-residue polypeptide: UPF0246 protein YaaA (258 aa).

It belongs to the UPF0246 family.

The protein is UPF0246 protein YaaA of Shigella sonnei (strain Ss046).